We begin with the raw amino-acid sequence, 319 residues long: Formimidoylglutamase (319 aa).

Mn(2+) contacts are provided by histidine 131, aspartate 154, histidine 156, aspartate 158, cysteine 248, and aspartate 250.

The protein belongs to the arginase family. It depends on Mn(2+) as a cofactor.

The catalysed reaction is N-formimidoyl-L-glutamate + H2O = formamide + L-glutamate. Its pathway is amino-acid degradation; L-histidine degradation into L-glutamate; L-glutamate from N-formimidoyl-L-glutamate (hydrolase route): step 1/1. Its function is as follows. Catalyzes the conversion of N-formimidoyl-L-glutamate to L-glutamate and formamide. In Legionella pneumophila subsp. pneumophila (strain Philadelphia 1 / ATCC 33152 / DSM 7513), this protein is Formimidoylglutamase.